A 360-amino-acid chain; its full sequence is Peptide chain release factor 1 (360 aa).

The residue at position 235 (Q235) is an N5-methylglutamine. Residues 284 to 312 (AKRQQAEASTRRNLLGSGDRSDRNRTYNF) form a disordered region.

Belongs to the prokaryotic/mitochondrial release factor family. Post-translationally, methylated by PrmC. Methylation increases the termination efficiency of RF1.

Its subcellular location is the cytoplasm. Functionally, peptide chain release factor 1 directs the termination of translation in response to the peptide chain termination codons UAG and UAA. In Escherichia coli O81 (strain ED1a), this protein is Peptide chain release factor 1.